The sequence spans 66 residues: Small ribosomal subunit protein bS21A (66 aa).

Basic residues predominate over residues 34–46 (KHYEKPSVKKKRK). A disordered region spans residues 34-66 (KHYEKPSVKKKRKQMEAERKRRKAQRFRKPDRD).

The protein belongs to the bacterial ribosomal protein bS21 family.

This chain is Small ribosomal subunit protein bS21A, found in Geobacter sulfurreducens (strain ATCC 51573 / DSM 12127 / PCA).